The chain runs to 192 residues: Ion-translocating oxidoreductase complex subunit B (192 aa).

Positions Met1–Ser26 are hydrophobic. Positions Glu32 to Val91 constitute a 4Fe-4S domain. Cys49, Cys52, Cys57, Cys74, Cys117, Cys120, Cys123, Cys127, Cys147, Cys150, Cys153, and Cys157 together coordinate [4Fe-4S] cluster. 4Fe-4S ferredoxin-type domains lie at Met108 to Arg137 and Ala138 to Val167.

This sequence belongs to the 4Fe4S bacterial-type ferredoxin family. RnfB subfamily. In terms of assembly, the complex is composed of six subunits: RsxA, RsxB, RsxC, RsxD, RsxE and RsxG. The cofactor is [4Fe-4S] cluster.

It is found in the cell inner membrane. Part of a membrane-bound complex that couples electron transfer with translocation of ions across the membrane. Required to maintain the reduced state of SoxR. The chain is Ion-translocating oxidoreductase complex subunit B from Escherichia coli O6:K15:H31 (strain 536 / UPEC).